The following is a 189-amino-acid chain: NADH-quinone oxidoreductase subunit B (189 aa).

[4Fe-4S] cluster is bound by residues cysteine 39, cysteine 40, cysteine 104, and cysteine 135.

This sequence belongs to the complex I 20 kDa subunit family. In terms of assembly, NDH-1 is composed of 14 different subunits. Subunits NuoB, C, D, E, F, and G constitute the peripheral sector of the complex. [4Fe-4S] cluster is required as a cofactor.

Its subcellular location is the cell inner membrane. The enzyme catalyses a quinone + NADH + 5 H(+)(in) = a quinol + NAD(+) + 4 H(+)(out). Functionally, NDH-1 shuttles electrons from NADH, via FMN and iron-sulfur (Fe-S) centers, to quinones in the respiratory chain. The immediate electron acceptor for the enzyme in this species is believed to be a menaquinone. Couples the redox reaction to proton translocation (for every two electrons transferred, four hydrogen ions are translocated across the cytoplasmic membrane), and thus conserves the redox energy in a proton gradient. This chain is NADH-quinone oxidoreductase subunit B, found in Chlorobaculum parvum (strain DSM 263 / NCIMB 8327) (Chlorobium vibrioforme subsp. thiosulfatophilum).